Here is a 355-residue protein sequence, read N- to C-terminus: Alanine racemase (355 aa).

Catalysis depends on K34, which acts as the Proton acceptor; specific for D-alanine. The residue at position 34 (K34) is an N6-(pyridoxal phosphate)lysine. R133 contacts substrate. Y249 serves as the catalytic Proton acceptor; specific for L-alanine. M297 contacts substrate.

Belongs to the alanine racemase family. The cofactor is pyridoxal 5'-phosphate.

It catalyses the reaction L-alanine = D-alanine. The protein operates within amino-acid biosynthesis; D-alanine biosynthesis; D-alanine from L-alanine: step 1/1. Catalyzes the interconversion of L-alanine and D-alanine. May also act on other amino acids. The sequence is that of Alanine racemase (alr) from Rickettsia rickettsii (strain Sheila Smith).